The following is a 409-amino-acid chain: Elongation factor Tu (409 aa).

The region spanning 10 to 214 (KPHVNIGTIG…EVDGYIPQPE (205 aa)) is the tr-type G domain. Positions 19–26 (GHVDHGKT) are G1. 19–26 (GHVDHGKT) lines the GTP pocket. Thr-26 lines the Mg(2+) pocket. Residues 60 to 64 (GITIN) form a G2 region. The interval 81-84 (DCPG) is G3. Residues 81–85 (DCPGH) and 136–139 (NKQD) each bind GTP. The segment at 136 to 139 (NKQD) is G4. Positions 174-176 (SAL) are G5.

Belongs to the TRAFAC class translation factor GTPase superfamily. Classic translation factor GTPase family. EF-Tu/EF-1A subfamily. As to quaternary structure, monomer.

The protein localises to the cytoplasm. It catalyses the reaction GTP + H2O = GDP + phosphate + H(+). Functionally, GTP hydrolase that promotes the GTP-dependent binding of aminoacyl-tRNA to the A-site of ribosomes during protein biosynthesis. The protein is Elongation factor Tu of Trichodesmium erythraeum (strain IMS101).